The following is a 141-amino-acid chain: Galactose-6-phosphate isomerase subunit LacA (141 aa).

This sequence belongs to the LacAB/RpiB family. In terms of assembly, heteromultimeric protein consisting of LacA and LacB.

It carries out the reaction aldehydo-D-galactose 6-phosphate = keto-D-tagatose 6-phosphate. It functions in the pathway carbohydrate metabolism; D-galactose 6-phosphate degradation; D-tagatose 6-phosphate from D-galactose 6-phosphate: step 1/1. The chain is Galactose-6-phosphate isomerase subunit LacA from Streptococcus equi subsp. equi (strain 4047).